The following is a 941-amino-acid chain: ATP-dependent 6-phosphofructokinase subunit beta (941 aa).

The segment at 2–558 (PDASLFNGTS…HMKNFISTNS (557 aa)) is N-terminal catalytic PFK domain 1. ATP is bound by residues glycine 191, 255–256 (RC), and 285–288 (GDGS). Aspartate 286 is a binding site for Mg(2+). Residues 331–333 (SID), arginine 368, 375–377 (MGR), glutamate 432, arginine 460, and 466–469 (HVQR) contribute to the beta-D-fructose 6-phosphate site. The active-site Proton acceptor is aspartate 333. The tract at residues 559 to 572 (ADHVPPSLPLEKRK) is interdomain linker. The tract at residues 573–941 (KVAIINVGAP…SDMLSGRTSL (369 aa)) is C-terminal regulatory PFK domain 2. Beta-D-fructose 2,6-bisphosphate is bound by residues arginine 643, 701-705 (TISNN), arginine 739, 746-748 (QGG), glutamate 806, lysine 832, 838-841 (HVQQ), and arginine 918.

The protein belongs to the phosphofructokinase type A (PFKA) family. ATP-dependent PFK group I subfamily. Eukaryotic two domain clade 'E' sub-subfamily. In terms of assembly, heterododecamer of 4 alpha, 4 beta and 4 gamma chains. The gamma chain bridges the N-terminal halves of the alpha and beta subunits. Requires Mg(2+) as cofactor.

The protein resides in the cytoplasm. It carries out the reaction beta-D-fructose 6-phosphate + ATP = beta-D-fructose 1,6-bisphosphate + ADP + H(+). The protein operates within carbohydrate degradation; glycolysis; D-glyceraldehyde 3-phosphate and glycerone phosphate from D-glucose: step 3/4. Allosterically activated by ADP, AMP, or fructose 2,6-bisphosphate, and allosterically inhibited by ATP or citrate. Its function is as follows. Catalyzes the phosphorylation of D-fructose 6-phosphate to fructose 1,6-bisphosphate by ATP, the first committing step of glycolysis. In Komagataella phaffii (strain GS115 / ATCC 20864) (Yeast), this protein is ATP-dependent 6-phosphofructokinase subunit beta (PFK2).